Here is a 164-residue protein sequence, read N- to C-terminus: Peroxynitrite isomerase 2 (164 aa).

Residues 17 to 23 carry the GXWXGXG motif; sequence GSWAGRG. A heme b-binding site is contributed by His-155.

This sequence belongs to the nitrobindin family. As to quaternary structure, homodimer. Heme b is required as a cofactor.

The catalysed reaction is peroxynitrite = nitrate. Its pathway is nitrogen metabolism. In terms of biological role, heme-binding protein able to scavenge peroxynitrite and to protect free L-tyrosine against peroxynitrite-mediated nitration, by acting as a peroxynitrite isomerase that converts peroxynitrite to nitrate. Therefore, this protein likely plays a role in peroxynitrite sensing and in the detoxification of reactive nitrogen and oxygen species (RNS and ROS, respectively). Is able to bind nitric oxide (NO) in vitro, but may act as a sensor of peroxynitrite levels in vivo. In Mycobacterium bovis (strain BCG / Pasteur 1173P2), this protein is Peroxynitrite isomerase 2.